The sequence spans 227 residues: Guanylate kinase (227 aa).

Residues 21–199 (GNLFMVVAPS…ALAELECIVA (179 aa)) form the Guanylate kinase-like domain. 28–35 (APSGAGKS) lines the ATP pocket.

It belongs to the guanylate kinase family.

It is found in the cytoplasm. The enzyme catalyses GMP + ATP = GDP + ADP. In terms of biological role, essential for recycling GMP and indirectly, cGMP. This Burkholderia thailandensis (strain ATCC 700388 / DSM 13276 / CCUG 48851 / CIP 106301 / E264) protein is Guanylate kinase.